Here is a 412-residue protein sequence, read N- to C-terminus: Multifunctional CCA protein (412 aa).

ATP contacts are provided by G8 and R11. CTP contacts are provided by G8 and R11. Residues D21 and D23 each coordinate Mg(2+). ATP is bound by residues R91, R137, and R140. R91, R137, and R140 together coordinate CTP. One can recognise an HD domain in the interval 228-329; that stretch reads TGIHTLMTLS…VKLFDSIDAW (102 aa).

Belongs to the tRNA nucleotidyltransferase/poly(A) polymerase family. Bacterial CCA-adding enzyme type 1 subfamily. As to quaternary structure, monomer. Can also form homodimers and oligomers. Requires Mg(2+) as cofactor. Ni(2+) serves as cofactor.

The catalysed reaction is a tRNA precursor + 2 CTP + ATP = a tRNA with a 3' CCA end + 3 diphosphate. It catalyses the reaction a tRNA with a 3' CCA end + 2 CTP + ATP = a tRNA with a 3' CCACCA end + 3 diphosphate. Functionally, catalyzes the addition and repair of the essential 3'-terminal CCA sequence in tRNAs without using a nucleic acid template. Adds these three nucleotides in the order of C, C, and A to the tRNA nucleotide-73, using CTP and ATP as substrates and producing inorganic pyrophosphate. tRNA 3'-terminal CCA addition is required both for tRNA processing and repair. Also involved in tRNA surveillance by mediating tandem CCA addition to generate a CCACCA at the 3' terminus of unstable tRNAs. While stable tRNAs receive only 3'-terminal CCA, unstable tRNAs are marked with CCACCA and rapidly degraded. This chain is Multifunctional CCA protein, found in Escherichia coli O1:K1 / APEC.